The sequence spans 448 residues: Carbamoyl phosphate synthase arginine-specific small chain (448 aa).

Residues 1–27 (MFKNIARLASMARSAPRTTASFQTRFM) constitute a mitochondrion transit peptide. One can recognise a Glutamine amidotransferase type-1 domain in the interval 224–415 (HIAVIDCGVK…LGQVHQYRAA (192 aa)). Cys304 acts as the Nucleophile in catalysis. Residues His388 and Glu390 contribute to the active site.

The protein belongs to the CarA family. Heterodimer composed of 2 chains; the small (or glutamine) chain promotes the hydrolysis of glutamine to ammonia, which is used by the large (or ammonia) chain to synthesize carbamoyl phosphate.

The protein resides in the mitochondrion matrix. The enzyme catalyses hydrogencarbonate + L-glutamine + 2 ATP + H2O = carbamoyl phosphate + L-glutamate + 2 ADP + phosphate + 2 H(+). It catalyses the reaction L-glutamine + H2O = L-glutamate + NH4(+). Its pathway is amino-acid biosynthesis; L-arginine biosynthesis; carbamoyl phosphate from bicarbonate: step 1/1. Functionally, small subunit of the arginine-specific carbamoyl phosphate synthase (CPSase). CPSase catalyzes the formation of carbamoyl phosphate from the ammonia moiety of glutamine, carbonate, and phosphate donated by ATP, the first step of the arginine biosynthetic pathway. The small subunit (glutamine amidotransferase) binds and cleaves glutamine to supply the large subunit with the substrate ammonia. The chain is Carbamoyl phosphate synthase arginine-specific small chain (CPA1) from Yarrowia lipolytica (strain CLIB 122 / E 150) (Yeast).